A 156-amino-acid polypeptide reads, in one-letter code: Succinate dehydrogenase assembly factor 2-B, mitochondrial (156 aa).

The transit peptide at methionine 1–leucine 24 directs the protein to the mitochondrion.

This sequence belongs to the SDHAF2 family. As to quaternary structure, interacts with the flavoprotein subunit within the SDH catalytic dimer.

Its subcellular location is the mitochondrion matrix. Its function is as follows. Plays an essential role in the assembly of succinate dehydrogenase (SDH), an enzyme complex (also referred to as respiratory complex II) that is a component of both the tricarboxylic acid (TCA) cycle and the mitochondrial electron transport chain, and which couples the oxidation of succinate to fumarate with the reduction of ubiquinone (coenzyme Q) to ubiquinol. Required for flavinylation (covalent attachment of FAD) of the flavoprotein subunit of the SDH catalytic dimer. This Drosophila yakuba (Fruit fly) protein is Succinate dehydrogenase assembly factor 2-B, mitochondrial.